The following is a 277-amino-acid chain: Putative thiosulfate sulfurtransferase (277 aa).

2 consecutive Rhodanese domains span residues 18–125 (HAPK…PLSS) and 154–274 (AINV…APIE). Cys-233 serves as the catalytic Cysteine persulfide intermediate. Arg-238 is a substrate binding site.

It catalyses the reaction thiosulfate + hydrogen cyanide = thiocyanate + sulfite + 2 H(+). May be a sulfotransferase involved in the formation of thiosulfate. This is Putative thiosulfate sulfurtransferase (cysA1) from Mycobacterium tuberculosis (strain CDC 1551 / Oshkosh).